Reading from the N-terminus, the 387-residue chain is Polyadenylate-binding protein RBP45A (387 aa).

3 RRM domains span residues lysine 60–alanine 140, histidine 154–asparagine 233, and threonine 260–serine 332. Positions tryptophan 329 to tryptophan 342 are enriched in polar residues. Residues tryptophan 329–glutamine 387 are disordered.

This sequence belongs to the polyadenylate-binding RBP45 family. As to quaternary structure, interacts with the poly(A) tail of mRNA in nucleus. As to expression, mostly expressed in seedlings, and, to a lower extent, in leaves, stems, and flowers. Present in immature anther tissues (tapetum cells) and mature pollen grains.

The protein resides in the nucleus. Functionally, heterogeneous nuclear ribonucleoprotein (hnRNP)-protein binding the poly(A) tail of mRNA and probably involved in some steps of pre-mRNA maturation. This chain is Polyadenylate-binding protein RBP45A (RBP45A), found in Arabidopsis thaliana (Mouse-ear cress).